Consider the following 201-residue polypeptide: 3-isopropylmalate dehydratase small subunit (201 aa).

Belongs to the LeuD family. LeuD type 1 subfamily. Heterodimer of LeuC and LeuD.

The enzyme catalyses (2R,3S)-3-isopropylmalate = (2S)-2-isopropylmalate. It participates in amino-acid biosynthesis; L-leucine biosynthesis; L-leucine from 3-methyl-2-oxobutanoate: step 2/4. Its function is as follows. Catalyzes the isomerization between 2-isopropylmalate and 3-isopropylmalate, via the formation of 2-isopropylmaleate. In Methylorubrum extorquens (strain ATCC 14718 / DSM 1338 / JCM 2805 / NCIMB 9133 / AM1) (Methylobacterium extorquens), this protein is 3-isopropylmalate dehydratase small subunit.